The sequence spans 228 residues: tRNA (guanine-N(1)-)-methyltransferase (228 aa).

S-adenosyl-L-methionine contacts are provided by residues Gly-111 and 135 to 140 (LGDYVL).

It belongs to the RNA methyltransferase TrmD family. In terms of assembly, homodimer.

Its subcellular location is the cytoplasm. It catalyses the reaction guanosine(37) in tRNA + S-adenosyl-L-methionine = N(1)-methylguanosine(37) in tRNA + S-adenosyl-L-homocysteine + H(+). Its function is as follows. Specifically methylates guanosine-37 in various tRNAs. In Clavibacter sepedonicus (Clavibacter michiganensis subsp. sepedonicus), this protein is tRNA (guanine-N(1)-)-methyltransferase.